We begin with the raw amino-acid sequence, 80 residues long: Exodeoxyribonuclease 7 small subunit (80 aa).

The protein belongs to the XseB family. As to quaternary structure, heterooligomer composed of large and small subunits.

It is found in the cytoplasm. The catalysed reaction is Exonucleolytic cleavage in either 5'- to 3'- or 3'- to 5'-direction to yield nucleoside 5'-phosphates.. Bidirectionally degrades single-stranded DNA into large acid-insoluble oligonucleotides, which are then degraded further into small acid-soluble oligonucleotides. This chain is Exodeoxyribonuclease 7 small subunit, found in Caulobacter sp. (strain K31).